A 711-amino-acid polypeptide reads, in one-letter code: Polyribonucleotide nucleotidyltransferase (711 aa).

The Mg(2+) site is built by D486 and D492. The KH domain maps to 553–612 (PRIHTIKISPDKIKDVIGKGGSVIRALTEETGTTIEIEDDGTVKIAATDGEKAKFAIRRI). The region spanning 622–690 (GRIYNGKVTR…RQGRVRLSIK (69 aa)) is the S1 motif domain. The segment at 690 to 711 (KEATEQTQPAAAPEAPAAEQGE) is disordered. The span at 694 to 711 (EQTQPAAAPEAPAAEQGE) shows a compositional bias: low complexity.

This sequence belongs to the polyribonucleotide nucleotidyltransferase family. As to quaternary structure, component of the RNA degradosome, which is a multiprotein complex involved in RNA processing and mRNA degradation. Mg(2+) serves as cofactor.

The protein localises to the cytoplasm. It catalyses the reaction RNA(n+1) + phosphate = RNA(n) + a ribonucleoside 5'-diphosphate. In terms of biological role, involved in mRNA degradation. Catalyzes the phosphorolysis of single-stranded polyribonucleotides processively in the 3'- to 5'-direction. This Enterobacter sp. (strain 638) protein is Polyribonucleotide nucleotidyltransferase.